The following is a 539-amino-acid chain: GMP synthase [glutamine-hydrolyzing] (539 aa).

The Glutamine amidotransferase type-1 domain occupies 4 to 203 (KILILDFGSQ…VHDICGCKSD (200 aa)). Cys82 acts as the Nucleophile in catalysis. Active-site residues include His177 and Glu179. The GMPS ATP-PPase domain maps to 204–395 (WNMPDYIAEA…LGLPHDMVYR (192 aa)). 231-237 (SGGVDSS) serves as a coordination point for ATP.

In terms of assembly, homodimer.

The catalysed reaction is XMP + L-glutamine + ATP + H2O = GMP + L-glutamate + AMP + diphosphate + 2 H(+). It participates in purine metabolism; GMP biosynthesis; GMP from XMP (L-Gln route): step 1/1. Functionally, catalyzes the synthesis of GMP from XMP. The sequence is that of GMP synthase [glutamine-hydrolyzing] from Janthinobacterium sp. (strain Marseille) (Minibacterium massiliensis).